A 680-amino-acid polypeptide reads, in one-letter code: Calcium-binding and coiled-coil domain-containing protein 1 (680 aa).

The tract at residues 1–30 (MEESSLSRAPSRGGVNFLNVARTYIPNTKV) is p300 KIX-binding. Residues 1–190 (MEESSLSRAP…VQELEKALAA (190 aa)) are N-terminal AD (CTNNB1 binding site). S4 bears the Phosphoserine mark. Positions 45 to 125 (SDWIGIFKVE…FQFREPRPMD (81 aa)) are interaction with GATA1. 3 coiled-coil regions span residues 145 to 205 (KATV…YKGL), 232 to 339 (ELEE…AELE), and 417 to 514 (QSVE…ADEK). The segment at 501–680 (RKLEARLEKV…HTYTHTHTHA (180 aa)) is C-terminal AD (CTNNB1 binding site); interaction with CCAR1. Residues 511 to 606 (ADEKWSEDPA…DSEAEDEKSV (96 aa)) are disordered. The UBZ1-type zinc finger occupies 654-679 (WKECPICKERFPVHTQTHTYTHTHTH). C657, C660, H675, and H679 together coordinate Zn(2+).

Belongs to the CALCOCO family. As to quaternary structure, part of a calphoglin complex consisting of CALCOCO1, PPA1 and PGM. Interacts with the bHLH-PAS domains of GRIP1, AHR and ARNT. Interacts with CTNNB1 via both its N- and C-terminal regions. Interacts with EP300. Interacts with CCAR1 (via N-terminus) and GATA1.

Its subcellular location is the cytoplasm. It localises to the nucleus. Functionally, functions as a coactivator for aryl hydrocarbon and nuclear receptors (NR). Recruited to promoters through its contact with the N-terminal basic helix-loop-helix-Per-Arnt-Sim (PAS) domain of transcription factors or coactivators, such as NCOA2. During ER-activation acts synergistically in combination with other NCOA2-binding proteins, such as EP300, CREBBP and CARM1. Involved in the transcriptional activation of target genes in the Wnt/CTNNB1 pathway. Functions as a secondary coactivator in LEF1-mediated transcriptional activation via its interaction with CTNNB1. Coactivator function for nuclear receptors and LEF1/CTNNB1 involves differential utilization of two different activation regions. In association with CCAR1 enhances GATA1- and MED1-mediated transcriptional activation from the gamma-globin promoter during erythroid differentiation of K562 erythroleukemia cells. In terms of biological role, seems to enhance inorganic pyrophosphatase thus activating phosphogluomutase (PMG). Probably functions as a component of the calphoglin complex, which is involved in linking cellular metabolism (phosphate and glucose metabolism) with other core functions including protein synthesis and degradation, calcium signaling and cell growth. This Bos taurus (Bovine) protein is Calcium-binding and coiled-coil domain-containing protein 1 (CALCOCO1).